Consider the following 473-residue polypeptide: Isocitrate dehydrogenase [NADP] (473 aa).

Threonine 104 is an NADP(+) binding site. D-threo-isocitrate-binding residues include serine 113, asparagine 115, arginine 119, arginine 129, and arginine 153. Aspartate 362 serves as a coordination point for Mg(2+). NADP(+) is bound by residues 394-400 (HGTAPKH), asparagine 407, tyrosine 446, and arginine 450.

It belongs to the isocitrate and isopropylmalate dehydrogenases family. Homodimer. Mg(2+) serves as cofactor. It depends on Mn(2+) as a cofactor.

It catalyses the reaction D-threo-isocitrate + NADP(+) = 2-oxoglutarate + CO2 + NADPH. Inhibited by either oxaloacetate or glyoxylate. Also inhibited by the adenine nucleotides AMP, ADP and ATP and by NADPH, which inhibits the activity by 28% when it is added to the assay mixture at 0.25 mM. Its function is as follows. Catalyzes the oxidative decarboxylation of isocitrate to 2-oxoglutarate and carbon dioxide with the concomitant reduction of NADP(+). The polypeptide is Isocitrate dehydrogenase [NADP] (Nostoc sp. (strain PCC 7120 / SAG 25.82 / UTEX 2576)).